The following is a 57-amino-acid chain: DNA-directed RNA polymerase subunit Rpo6 (57 aa).

It belongs to the archaeal Rpo6/eukaryotic RPB6 RNA polymerase subunit family. As to quaternary structure, part of the RNA polymerase complex.

Its subcellular location is the cytoplasm. It carries out the reaction RNA(n) + a ribonucleoside 5'-triphosphate = RNA(n+1) + diphosphate. Its function is as follows. DNA-dependent RNA polymerase (RNAP) catalyzes the transcription of DNA into RNA using the four ribonucleoside triphosphates as substrates. The sequence is that of DNA-directed RNA polymerase subunit Rpo6 from Haloarcula marismortui (strain ATCC 43049 / DSM 3752 / JCM 8966 / VKM B-1809) (Halobacterium marismortui).